A 541-amino-acid chain; its full sequence is Formimidoyltransferase-cyclodeaminase (541 aa).

The formiminotransferase N-subdomain stretch occupies residues 1-181 (MSQLVECVPN…GATVAGARKF (181 aa)). The For formimidoyltransferase activity role is filled by His82. 163-172 (GPSAFVPSWG) is a folate binding site. The tract at residues 182 to 326 (LLAFNINLLS…PKERIIEYLV (145 aa)) is formiminotransferase C-subdomain. The interval 327 to 334 (PEAGPEQS) is linker. The interval 335-541 (LLHKPLRTFV…VLDRLEARQA (207 aa)) is cyclodeaminase/cyclohydrolase. Asp412 (for cyclodeaminase activity) is an active-site residue. Ser520 carries the post-translational modification Phosphoserine.

It in the C-terminal section; belongs to the cyclodeaminase/cyclohydrolase family. The protein in the N-terminal section; belongs to the formiminotransferase family. Homooctamer, including four polyglutamate binding sites. The subunits are arranged as a tetramer of dimers, and form a planar ring-shaped structure.

The protein localises to the cytoplasm. It is found in the cytosol. The protein resides in the golgi apparatus. Its subcellular location is the cytoskeleton. It localises to the microtubule organizing center. The protein localises to the centrosome. It is found in the centriole. It carries out the reaction 5-formimidoyltetrahydrofolate + L-glutamate = N-formimidoyl-L-glutamate + (6S)-5,6,7,8-tetrahydrofolate. The catalysed reaction is 5-formimidoyltetrahydrofolate + 2 H(+) = (6R)-5,10-methenyltetrahydrofolate + NH4(+). The protein operates within amino-acid degradation; L-histidine degradation into L-glutamate; L-glutamate from N-formimidoyl-L-glutamate (transferase route): step 1/1. Folate-dependent enzyme, that displays both transferase and deaminase activity. Serves to channel one-carbon units from formiminoglutamate to the folate pool. In terms of biological role, binds and promotes bundling of vimentin filaments originating from the Golgi. The polypeptide is Formimidoyltransferase-cyclodeaminase (FTCD) (Sus scrofa (Pig)).